Here is an 876-residue protein sequence, read N- to C-terminus: Phosphoenolpyruvate carboxylase (876 aa).

Catalysis depends on residues H138 and K544.

Belongs to the PEPCase type 1 family. Mg(2+) is required as a cofactor.

The catalysed reaction is oxaloacetate + phosphate = phosphoenolpyruvate + hydrogencarbonate. Functionally, forms oxaloacetate, a four-carbon dicarboxylic acid source for the tricarboxylic acid cycle. The protein is Phosphoenolpyruvate carboxylase of Marinomonas sp. (strain MWYL1).